A 362-amino-acid chain; its full sequence is 3-dehydroquinate synthase (362 aa).

NAD(+)-binding positions include 70–75 (EGEQYK), 104–108 (GVIGD), 128–129 (TT), lysine 141, lysine 150, and 168–171 (TLTT). Residues glutamate 183, histidine 246, and histidine 263 each coordinate Zn(2+).

This sequence belongs to the sugar phosphate cyclases superfamily. Dehydroquinate synthase family. The cofactor is Co(2+). Requires Zn(2+) as cofactor. NAD(+) is required as a cofactor.

Its subcellular location is the cytoplasm. The enzyme catalyses 7-phospho-2-dehydro-3-deoxy-D-arabino-heptonate = 3-dehydroquinate + phosphate. It functions in the pathway metabolic intermediate biosynthesis; chorismate biosynthesis; chorismate from D-erythrose 4-phosphate and phosphoenolpyruvate: step 2/7. Catalyzes the conversion of 3-deoxy-D-arabino-heptulosonate 7-phosphate (DAHP) to dehydroquinate (DHQ). This is 3-dehydroquinate synthase from Histophilus somni (strain 129Pt) (Haemophilus somnus).